The primary structure comprises 258 residues: MTRIHPNALVDPKARLGEEVEVGPFSVIGPDVEIDEGTWIGPHAVIQGPTRIGRDNRIYQFAALGEAPQHKGYQGEPTELVIGDGNTIREFVTCHRGTAQGRGETRIGDHNWLMAYCHIAHDCRLGNHLLFANSASLAGHVDVGDHATLGGFALVHQFCRIGPYAFCGFGSGINRDVPPFVTVSGQMAVPHGINSVGLRRHGFSRERIRDIKRAYRTIYRQGLRLDDAREALCQQLSHSADVQGMVDFIDNSQRGLLR.

Belongs to the transferase hexapeptide repeat family. LpxA subfamily. As to quaternary structure, homotrimer.

It is found in the cytoplasm. It carries out the reaction a (3R)-hydroxyacyl-[ACP] + UDP-N-acetyl-alpha-D-glucosamine = a UDP-3-O-[(3R)-3-hydroxyacyl]-N-acetyl-alpha-D-glucosamine + holo-[ACP]. It functions in the pathway glycolipid biosynthesis; lipid IV(A) biosynthesis; lipid IV(A) from (3R)-3-hydroxytetradecanoyl-[acyl-carrier-protein] and UDP-N-acetyl-alpha-D-glucosamine: step 1/6. Involved in the biosynthesis of lipid A, a phosphorylated glycolipid that anchors the lipopolysaccharide to the outer membrane of the cell. The protein is Acyl-[acyl-carrier-protein]--UDP-N-acetylglucosamine O-acyltransferase of Halorhodospira halophila (strain DSM 244 / SL1) (Ectothiorhodospira halophila (strain DSM 244 / SL1)).